We begin with the raw amino-acid sequence, 956 residues long: MIIHFTLNGAPQELTVNPGENVQKLLFNMGMHSVRNSDDGFGFAGSDAIIFNGNIVNASLLIAAQLEKADIRTAESLGKWNELSLVQQAMVDVGVVQSGYNDPAAALIITDLLDRIAAPTREEIDDALSGLFSRDAGWQQYYQVIELAVARKNNPQATIDIAPTFRDDLEVIGKHYPKTDAAKMVQAKPCYVEDRVTADACVIKMLRSPHAHALITHLDVSKAEALPGVVHVITHLNCPDIYYTPGGQSAPEPSPLDRRMFGKKMRHVGDRVAAVVAESEEIALEALKLIEVEYEVLKPVMSIDEAMAEDAPVVHDEPVVYVAGAPDTLEDDNSHAAQRGEHMIINFPIGSRPRKNIAASIHGHIGDMDKGFADADVIIERTYNSTQAQQCPTETHICFTRMDGDRLVIHASTQVPWHLRRQVARLVDMKQHKVHVIKERVGGGFGSKQDILLEEVCAWATCVTGRPVLFRYTREEEFIANTSRHVAKVTVKLGAKKDGRLTAVKMDFRANTGPYGNHSLTVPCNGPALSLPLYPCDNVDFQVTTYYSNICPNGAYQGYGAPKGNFAITMALAELAEQLQIDQLEIIERNRVHEGQELKILGAIGEGKAPTSVPSAASCALEEILRQGREMIQWSSPKPQNGDWHIGRGVAIIMQKSGIPDIDQANCMIKLESDGTFIVHSGGADIGTGLDTVVTKLAAEVLHCPPQDVHVISGDTDHALFDKGAYASSGTCFSGNAARLAAENLREKILFHGAQMLGEPVADVQLATPGVVRGKKGEVSFGDIAHKGETGTGFGSLVGTGSYITPDFAFPYGANFAEVAVNTRTGEIRLDKFYALLDCGTPVNPELALGQIYGATLRAIGHSMSEEIIYDAEGHPLTRDLRSYGAPKIGDIPRDFRAVLVPSDDKVGPFGAKSISEIGVNGAAPAIATAIHDACGIWLREWHFTPEKILTALEKI.

The Mo-molybdopterin site is built by Gln414, Phe445, and Ala727.

This sequence belongs to the xanthine dehydrogenase family. It depends on [2Fe-2S] cluster as a cofactor. Mo-molybdopterin serves as cofactor.

Its function is as follows. Probably has no xanthine dehydrogenase activity; however deletion results in increased adenine sensitivity, suggesting that this protein contributes to the conversion of adenine to guanine nucleotides during purine salvage. This is Probable hypoxanthine oxidase XdhD (xdhD) from Escherichia coli O157:H7.